The chain runs to 1788 residues: Laminin subunit beta-1 (1788 aa).

An N-terminal signal peptide occupies residues 1–24 (MLELRLIVVIVLALLSWQWDPVDS). The segment at 23-43 (DSQRPPQHGRRDRPKYPPNKF) is disordered. One can recognise a Laminin N-terminal domain in the interval 50 to 287 (ERSSCYPATG…GISNMVVRGS (238 aa)). 3 N-linked (GlcNAc...) asparagine glycosylation sites follow: asparagine 138, asparagine 201, and asparagine 232. 19 disulfides stabilise this stretch: cysteine 288/cysteine 297, cysteine 290/cysteine 318, cysteine 320/cysteine 329, cysteine 332/cysteine 352, cysteine 355/cysteine 364, cysteine 357/cysteine 382, cysteine 385/cysteine 394, cysteine 397/cysteine 415, cysteine 418/cysteine 431, cysteine 420/cysteine 446, cysteine 448/cysteine 457, cysteine 460/cysteine 475, cysteine 478/cysteine 491, cysteine 480/cysteine 498, cysteine 500/cysteine 509, cysteine 512/cysteine 526, cysteine 529/cysteine 541, cysteine 531/cysteine 548, and cysteine 550/cysteine 559. 4 consecutive Laminin EGF-like domains span residues 288 to 354 (CSCY…ACKK), 355 to 417 (CECN…VCQP), 418 to 477 (CDCD…GCEP), and 478 to 528 (CTCN…GCSL). N-linked (GlcNAc...) asparagine glycosylation occurs at asparagine 487. Positions 529 to 559 (CNCDAGGSYDNYCDVISGQCRCRPHMTGRSC) constitute a Laminin EGF-like 5; truncated domain. In terms of domain architecture, Laminin IV type B spans 567–783 (FIPLLPEVHE…LDNILSVFVH (217 aa)). Asparagine 591 carries an N-linked (GlcNAc...) asparagine glycan. Positions 641 to 643 (RGD) match the Cell attachment site motif. Cystine bridges form between cysteine 789/cysteine 801, cysteine 791/cysteine 808, cysteine 810/cysteine 819, cysteine 822/cysteine 834, cysteine 837/cysteine 849, cysteine 839/cysteine 856, cysteine 858/cysteine 867, cysteine 870/cysteine 880, cysteine 883/cysteine 892, cysteine 885/cysteine 899, cysteine 902/cysteine 911, cysteine 914/cysteine 930, cysteine 933/cysteine 949, cysteine 935/cysteine 960, cysteine 962/cysteine 971, cysteine 974/cysteine 988, cysteine 991/cysteine 1005, cysteine 993/cysteine 1012, cysteine 1015/cysteine 1024, cysteine 1027/cysteine 1040, cysteine 1043/cysteine 1057, cysteine 1045/cysteine 1064, cysteine 1066/cysteine 1075, cysteine 1078/cysteine 1091, cysteine 1094/cysteine 1106, cysteine 1096/cysteine 1113, cysteine 1115/cysteine 1124, cysteine 1127/cysteine 1139, cysteine 1142/cysteine 1154, cysteine 1144/cysteine 1161, cysteine 1163/cysteine 1172, and cysteine 1175/cysteine 1186. Laminin EGF-like domains follow at residues 789–836 (CNCN…GCKA), 837–882 (CDCN…ECRV), 883–932 (CQCN…GCRP), 933–990 (CRCP…TCSK), 991–1042 (CECS…NCQQ), 1043–1093 (CECD…GCES), 1094–1141 (CNCD…KCQP), and 1142–1188 (CECD…HCSP). Residue asparagine 1051 is glycosylated (N-linked (GlcNAc...) asparagine). Residues 1189 to 1405 (CGECFNNWDL…SQIPELNNQV (217 aa)) form a domain II region. 4 N-linked (GlcNAc...) asparagine glycosylation sites follow: asparagine 1246, asparagine 1301, asparagine 1330, and asparagine 1341. A coiled-coil region spans residues 1255 to 1405 (EKLDYETQSL…SQIPELNNQV (151 aa)). Positions 1406–1432 (CGKPGDPCDSLCGGAGCGHCGGFLSCE) are domain alpha. The tract at residues 1433–1788 (HGAKTHSEEA…RGSHYRQCYT (356 aa)) is domain I. Positions 1453–1505 (ITSKKDQADQTIRALTQAKLNASEAYEKAKRGFEQSERYLNQTNANIKLAENL) form a coiled coil. N-linked (GlcNAc...) asparagine glycans are attached at residues asparagine 1473, asparagine 1493, and asparagine 1515. The stretch at 1540 to 1561 (EEIETLGDQINRAVSSLKNVEA) forms a coiled coil. N-linked (GlcNAc...) asparagine glycosylation is found at asparagine 1581, asparagine 1644, and asparagine 1703. A coiled-coil region spans residues 1608–1762 (QGKAKDAIQQ…QQLLRLQAEI (155 aa)). The disordered stretch occupies residues 1690-1719 (GEANNLQSATSATNQTLTDRASRSENARER). Polar residues predominate over residues 1693-1708 (NNLQSATSATNQTLTD). Residues 1709–1719 (RASRSENARER) are compositionally biased toward basic and acidic residues.

As to quaternary structure, laminin is a complex glycoprotein, consisting of three different polypeptide chains (alpha, beta, gamma), which are bound to each other by disulfide bonds into a cross-shaped molecule comprising one long and three short arms with globules at each end. As to expression, found in the basement membranes (major component).

The protein localises to the secreted. It localises to the extracellular space. Its subcellular location is the extracellular matrix. It is found in the basement membrane. Functionally, binding to cells via a high affinity receptor, laminin is thought to mediate the attachment, migration and organization of cells into tissues during embryonic development by interacting with other extracellular matrix components. Required for Ndg localization to the basement membrane. This is Laminin subunit beta-1 (LanB1) from Drosophila melanogaster (Fruit fly).